The chain runs to 388 residues: Processive diacylglycerol beta-glucosyltransferase (388 aa).

The protein belongs to the glycosyltransferase 28 family. UgtP subfamily.

The protein localises to the cell membrane. The enzyme catalyses a 1,2-diacyl-3-O-(beta-D-glucopyranosyl)-sn-glycerol + UDP-alpha-D-glucose = a 1,2-diacyl-3-O-(beta-D-Glc-(1-&gt;6)-beta-D-Glc)-sn-glycerol + UDP + H(+). It catalyses the reaction a 1,2-diacyl-3-O-(beta-D-Glc-(1-&gt;6)-beta-D-Glc)-sn-glycerol + UDP-alpha-D-glucose = a 1,2-diacyl-3-O-(beta-D-Glc-(1-&gt;6)-beta-D-Glc-(1-&gt;6)-beta-D-Glc)-sn-glycerol + UDP + H(+). It carries out the reaction a 1,2-diacyl-sn-glycerol + UDP-alpha-D-glucose = a 1,2-diacyl-3-O-(beta-D-glucopyranosyl)-sn-glycerol + UDP + H(+). Its pathway is glycolipid metabolism; diglucosyl-diacylglycerol biosynthesis. In terms of biological role, processive glucosyltransferase involved in the biosynthesis of both the bilayer- and non-bilayer-forming membrane glucolipids. Is able to successively transfer up to three glucosyl residues to diacylglycerol (DAG), thereby catalyzing the formation of beta-monoglucosyl-DAG (3-O-(beta-D-glucopyranosyl)-1,2-diacyl-sn-glycerol), beta-diglucosyl-DAG (3-O-(beta-D-glucopyranosyl-beta-(1-&gt;6)-D-glucopyranosyl)-1,2-diacyl-sn-glycerol) and beta-triglucosyl-DAG (3-O-(beta-D-glucopyranosyl-beta-(1-&gt;6)-D-glucopyranosyl-beta-(1-&gt;6)-D-glucopyranosyl)-1,2-diacyl-sn-glycerol). Beta-diglucosyl-DAG is the predominant glycolipid found in Bacillales and is also used as a membrane anchor for lipoteichoic acid (LTA). This Bacillus cereus (strain ATCC 14579 / DSM 31 / CCUG 7414 / JCM 2152 / NBRC 15305 / NCIMB 9373 / NCTC 2599 / NRRL B-3711) protein is Processive diacylglycerol beta-glucosyltransferase.